Reading from the N-terminus, the 495-residue chain is Cysteine--tRNA ligase (495 aa).

Zn(2+) is bound at residue Cys-35. Positions 37-47 match the 'HIGH' region motif; the sequence is PTVYSNVHLGN. Cys-230, His-255, and Glu-259 together coordinate Zn(2+). The 'KMSKS' region motif lies at 287–291; it reads KMSKS. Residue Lys-290 participates in ATP binding.

This sequence belongs to the class-I aminoacyl-tRNA synthetase family. Monomer. It depends on Zn(2+) as a cofactor.

The protein resides in the cytoplasm. The enzyme catalyses tRNA(Cys) + L-cysteine + ATP = L-cysteinyl-tRNA(Cys) + AMP + diphosphate. This is Cysteine--tRNA ligase from Flavobacterium psychrophilum (strain ATCC 49511 / DSM 21280 / CIP 103535 / JIP02/86).